We begin with the raw amino-acid sequence, 263 residues long: Pheophorbidase (263 aa).

In terms of domain architecture, AB hydrolase-1 spans 13–244 (HFVFVHGASH…LEESDHSAFF (232 aa)). S88 acts as the Acyl-ester intermediate in catalysis. Active-site charge relay system residues include D212 and H240.

It belongs to the AB hydrolase superfamily. As to quaternary structure, homodimer.

The protein localises to the cytoplasm. The enzyme catalyses pheophorbide a + H2O + H(+) = pyropheophorbide a + methanol + CO2. Inhibited by methanol and phenylmethylsulfonicfluoride (PMSF). Functionally, involved in chlorophyll degradation. Specific for the pheophorbides of the dihydroporphyrin and tetrahydroporphyrin types. Chlorophyllide a, pheophytin a and the nonfluorescent chlorophyll catabolite (NCC) are not used as substrates. The protein is Pheophorbidase (PPD) of Raphanus sativus (Radish).